The chain runs to 167 residues: Insertion element IS1 4 protein InsB (167 aa).

This sequence belongs to the transposase 27 family.

Absolutely required for transposition of IS1. This chain is Insertion element IS1 4 protein InsB (insB4), found in Escherichia coli (strain K12).